The following is a 122-amino-acid chain: Small ribosomal subunit protein bS6 (122 aa).

The segment at 99 to 122 is disordered; sequence PSPMMKEVAREEAKKAAAQTEQAA.

It belongs to the bacterial ribosomal protein bS6 family.

Its function is as follows. Binds together with bS18 to 16S ribosomal RNA. The polypeptide is Small ribosomal subunit protein bS6 (Ralstonia pickettii (strain 12J)).